Consider the following 141-residue polypeptide: Large ribosomal subunit protein uL11 (141 aa).

It belongs to the universal ribosomal protein uL11 family. As to quaternary structure, part of the ribosomal stalk of the 50S ribosomal subunit. Interacts with L10 and the large rRNA to form the base of the stalk. L10 forms an elongated spine to which L12 dimers bind in a sequential fashion forming a multimeric L10(L12)X complex. Post-translationally, one or more lysine residues are methylated.

Its function is as follows. Forms part of the ribosomal stalk which helps the ribosome interact with GTP-bound translation factors. The polypeptide is Large ribosomal subunit protein uL11 (Synechococcus sp. (strain JA-2-3B'a(2-13)) (Cyanobacteria bacterium Yellowstone B-Prime)).